A 119-amino-acid chain; its full sequence is DNA-binding protein MmarC7_1157 (119 aa).

Positions 1–12 (MNPEEIRQRRLQ) are enriched in basic and acidic residues. The tract at residues 1–37 (MNPEEIRQRRLQEMQAKAQEQGAANDPEAQRQAQEQQ) is disordered.

Belongs to the PDCD5 family.

This chain is DNA-binding protein MmarC7_1157, found in Methanococcus maripaludis (strain C7 / ATCC BAA-1331).